The sequence spans 400 residues: SEC14-like protein 3 (400 aa).

The CRAL-TRIO domain maps to 76–249 (PPEVIQKYMP…QFGGTLTDPD (174 aa)). Residues 275-383 (KTQYEHSVQI…AKKVSFTVEV (109 aa)) enclose the GOLD domain.

Its function is as follows. Probable hydrophobic ligand-binding protein; may play a role in the transport of hydrophobic ligands like tocopherol, squalene and phospholipids. This Homo sapiens (Human) protein is SEC14-like protein 3 (SEC14L3).